Consider the following 87-residue polypeptide: MANIKSAKKRALQSEKRRQHNASRRSMTRTYLKKVIAAIASGDKAAATAAFAVAQPIMDRMATKGLIHKNKAARHKSRLSAQIKAMA.

The interval 1-27 (MANIKSAKKRALQSEKRRQHNASRRSM) is disordered.

The protein belongs to the bacterial ribosomal protein bS20 family.

Binds directly to 16S ribosomal RNA. The sequence is that of Small ribosomal subunit protein bS20 from Aeromonas hydrophila subsp. hydrophila (strain ATCC 7966 / DSM 30187 / BCRC 13018 / CCUG 14551 / JCM 1027 / KCTC 2358 / NCIMB 9240 / NCTC 8049).